Here is a 634-residue protein sequence, read N- to C-terminus: Chaperone protein HtpG (634 aa).

The segment at 1 to 343 is a; substrate-binding; it reads MTEAENRVTL…SDSLPLNVSR (343 aa). The b stretch occupies residues 344–560; the sequence is EILQENKQLE…SYGMSRTMER (217 aa). The tract at residues 561 to 634 is c; the sequence is IMKSAGQNIP…KLNGLLQSLL (74 aa).

The protein belongs to the heat shock protein 90 family. Homodimer.

It is found in the cytoplasm. Its function is as follows. Molecular chaperone. Has ATPase activity. This is Chaperone protein HtpG from Methylococcus capsulatus (strain ATCC 33009 / NCIMB 11132 / Bath).